The sequence spans 162 residues: Crossover junction endodeoxyribonuclease RuvC (162 aa).

Active-site residues include Asp-7, Glu-67, and Asp-140. Residues Asp-7, Glu-67, and Asp-140 each contribute to the Mg(2+) site.

Belongs to the RuvC family. As to quaternary structure, homodimer which binds Holliday junction (HJ) DNA. The HJ becomes 2-fold symmetrical on binding to RuvC with unstacked arms; it has a different conformation from HJ DNA in complex with RuvA. In the full resolvosome a probable DNA-RuvA(4)-RuvB(12)-RuvC(2) complex forms which resolves the HJ. The cofactor is Mg(2+).

It localises to the cytoplasm. The enzyme catalyses Endonucleolytic cleavage at a junction such as a reciprocal single-stranded crossover between two homologous DNA duplexes (Holliday junction).. The RuvA-RuvB-RuvC complex processes Holliday junction (HJ) DNA during genetic recombination and DNA repair. Endonuclease that resolves HJ intermediates. Cleaves cruciform DNA by making single-stranded nicks across the HJ at symmetrical positions within the homologous arms, yielding a 5'-phosphate and a 3'-hydroxyl group; requires a central core of homology in the junction. The consensus cleavage sequence is 5'-(A/T)TT(C/G)-3'. Cleavage occurs on the 3'-side of the TT dinucleotide at the point of strand exchange. HJ branch migration catalyzed by RuvA-RuvB allows RuvC to scan DNA until it finds its consensus sequence, where it cleaves and resolves the cruciform DNA. This chain is Crossover junction endodeoxyribonuclease RuvC, found in Heliobacterium modesticaldum (strain ATCC 51547 / Ice1).